A 486-amino-acid chain; its full sequence is Siroheme synthase (486 aa).

The precorrin-2 dehydrogenase /sirohydrochlorin ferrochelatase stretch occupies residues 1–203 (MNYFPIFANL…RQNTLAEREL (203 aa)). NAD(+) contacts are provided by residues 22 to 23 (AV) and 43 to 44 (KH). Serine 128 bears the Phosphoserine mark. Residues 217–486 (GSVSLVGAGP…LGTGQEQQAA (270 aa)) form a uroporphyrinogen-III C-methyltransferase region. Proline 226 contributes to the S-adenosyl-L-methionine binding site. Aspartate 249 (proton acceptor) is an active-site residue. Lysine 271 serves as the catalytic Proton donor. S-adenosyl-L-methionine contacts are provided by residues 302–304 (GGD), valine 307, 332–333 (TA), methionine 384, and glycine 413.

The protein in the N-terminal section; belongs to the precorrin-2 dehydrogenase / sirohydrochlorin ferrochelatase family. It in the C-terminal section; belongs to the precorrin methyltransferase family.

The enzyme catalyses uroporphyrinogen III + 2 S-adenosyl-L-methionine = precorrin-2 + 2 S-adenosyl-L-homocysteine + H(+). The catalysed reaction is precorrin-2 + NAD(+) = sirohydrochlorin + NADH + 2 H(+). It catalyses the reaction siroheme + 2 H(+) = sirohydrochlorin + Fe(2+). Its pathway is cofactor biosynthesis; adenosylcobalamin biosynthesis; precorrin-2 from uroporphyrinogen III: step 1/1. The protein operates within cofactor biosynthesis; adenosylcobalamin biosynthesis; sirohydrochlorin from precorrin-2: step 1/1. It participates in porphyrin-containing compound metabolism; siroheme biosynthesis; precorrin-2 from uroporphyrinogen III: step 1/1. It functions in the pathway porphyrin-containing compound metabolism; siroheme biosynthesis; siroheme from sirohydrochlorin: step 1/1. Its pathway is porphyrin-containing compound metabolism; siroheme biosynthesis; sirohydrochlorin from precorrin-2: step 1/1. Multifunctional enzyme that catalyzes the SAM-dependent methylations of uroporphyrinogen III at position C-2 and C-7 to form precorrin-2 via precorrin-1. Then it catalyzes the NAD-dependent ring dehydrogenation of precorrin-2 to yield sirohydrochlorin. Finally, it catalyzes the ferrochelation of sirohydrochlorin to yield siroheme. The protein is Siroheme synthase of Neisseria meningitidis serogroup A / serotype 4A (strain DSM 15465 / Z2491).